A 451-amino-acid chain; its full sequence is Ubiquinone biosynthesis monooxygenase COQ6, mitochondrial (451 aa).

Belongs to the UbiH/COQ6 family. Component of a multi-subunit COQ enzyme complex. The cofactor is FAD.

Its subcellular location is the mitochondrion inner membrane. It catalyses the reaction a 4-hydroxy-3-(all-trans-polyprenyl)benzoate + 2 reduced [2Fe-2S]-[ferredoxin] + O2 + 2 H(+) = a 3,4-dihydroxy-5-(all-trans-polyprenyl)benzoate + 2 oxidized [2Fe-2S]-[ferredoxin] + H2O. It carries out the reaction a 2-methoxy-6-(all-trans-polyprenyl)phenol + 2 reduced [2Fe-2S]-[ferredoxin] + O2 + 2 H(+) = a 2-methoxy-6-(all-trans-polyprenyl)benzene-1,4-diol + 2 oxidized [2Fe-2S]-[ferredoxin] + H2O. It participates in cofactor biosynthesis; ubiquinone biosynthesis. Its function is as follows. FAD-dependent monooxygenase required for two non-consecutive steps during ubiquinone biosynthesis. Required for the C5-ring hydroxylation during ubiquinone biosynthesis by catalyzing the hydroxylation of 4-hydroxy-3-(all-trans-polyprenyl)benzoic acid to 3,4-dihydroxy-5-(all-trans-polyprenyl)benzoic acid. Also acts downstream of coq4, for the C1-hydroxylation during ubiquinone biosynthesis by catalyzing the hydroxylation of 2-methoxy-6-(all-trans-polyprenyl)phenol to 2-methoxy-6-(all-trans-polyprenyl)benzene-1,4-diol. The electrons required for the hydroxylation reaction are funneled indirectly to coq-6 from NADPH via a ferredoxin/ferredoxin reductase system. This Caenorhabditis elegans protein is Ubiquinone biosynthesis monooxygenase COQ6, mitochondrial.